Consider the following 239-residue polypeptide: MVIKAQSPAGFAEEYIIESIWNNRFPPGSILPAERELSELIGVTRTTLREVLQRLARDGWLTIQHGKPTKVNNFWETSGLNILETLARLDHDSVPQLIDNLLSVRTNISTIFIRTAFRQHPDKALAVLDSAREVEDHADAFAELDYNIFRGLAFASGNPIYGLILNGMKGLYTRIGRHYFSSPEARSLALGFYHQLAKVCEAGLHDQVYELVRRYGHDSGEIWHRMQKSLPGDLAMNMR.

Positions glutamine 6 to phenylalanine 74 constitute an HTH gntR-type domain. A DNA-binding region (H-T-H motif) is located at residues glutamate 34–glutamine 53.

As to quaternary structure, homodimer.

Its subcellular location is the cytoplasm. In terms of biological role, multifunctional regulator of fatty acid metabolism. In Klebsiella pneumoniae subsp. pneumoniae (strain ATCC 700721 / MGH 78578), this protein is Fatty acid metabolism regulator protein.